The primary structure comprises 188 residues: Large ribosomal subunit protein uL5 (188 aa).

Belongs to the universal ribosomal protein uL5 family. As to quaternary structure, part of the 50S ribosomal subunit; part of the 5S rRNA/L5/L18/L25 subcomplex. Contacts the 5S rRNA and the P site tRNA. Forms a bridge to the 30S subunit in the 70S ribosome.

Its function is as follows. This is one of the proteins that bind and probably mediate the attachment of the 5S RNA into the large ribosomal subunit, where it forms part of the central protuberance. In the 70S ribosome it contacts protein S13 of the 30S subunit (bridge B1b), connecting the 2 subunits; this bridge is implicated in subunit movement. Contacts the P site tRNA; the 5S rRNA and some of its associated proteins might help stabilize positioning of ribosome-bound tRNAs. This Aquifex aeolicus (strain VF5) protein is Large ribosomal subunit protein uL5.